Here is a 189-residue protein sequence, read N- to C-terminus: MEDQVILVDEHDNKVGFAGKMAAHQRGALHRAISIFVFDSHSRLMLQRRAAGKYHSGGLWSNTCCSHPRPNEESADAARRRLREEMGVDCELKKAFSFVYRTKFGSGLIEHEFDHVFFGNHDGRPVLNPDEADDWKWVDLTELTVDVRKRPETYSFWLAACLDRVISCRSLNGAGAAAQKIGSTITLMA.

The Mn(2+) site is built by H24 and H30. The Nudix hydrolase domain occupies 28–160 (ALHRAISIFV…PETYSFWLAA (133 aa)). C65 is an active-site residue. Mg(2+) is bound at residue C65. H67 lines the Mn(2+) pocket. E85 provides a ligand contact to Mg(2+). Mn(2+) is bound by residues E110 and E112. E112 is an active-site residue.

Belongs to the IPP isomerase type 1 family. The cofactor is Mg(2+). Mn(2+) is required as a cofactor.

Its subcellular location is the cytoplasm. It carries out the reaction isopentenyl diphosphate = dimethylallyl diphosphate. Its pathway is isoprenoid biosynthesis; dimethylallyl diphosphate biosynthesis; dimethylallyl diphosphate from isopentenyl diphosphate: step 1/1. Its function is as follows. Catalyzes the 1,3-allylic rearrangement of the homoallylic substrate isopentenyl (IPP) to its highly electrophilic allylic isomer, dimethylallyl diphosphate (DMAPP). The chain is Isopentenyl-diphosphate Delta-isomerase 2 from Aromatoleum aromaticum (strain DSM 19018 / LMG 30748 / EbN1) (Azoarcus sp. (strain EbN1)).